Consider the following 317-residue polypeptide: Prenyl transferase paxC (317 aa).

Residues lysine 53 and histidine 86 each coordinate substrate. Residues aspartate 93 and aspartate 97 each coordinate Mg(2+). Arginine 102, lysine 186, threonine 187, glutamine 216, asparagine 223, and lysine 233 together coordinate substrate.

Belongs to the FPP/GGPP synthase family.

The protein operates within secondary metabolite biosynthesis. In terms of biological role, prenyl transferase; part of the gene cluster that mediates the biosynthesis of paxalline, a mycotoxin that acts as an inhibitor of mammalian maxi-K channels. PaxG, the geranylgeranyl diphosphate (GGPP) synthase is proposed to catalyze the first step in paxilline biosynthesis. Condensation of indole-3-glycerol phosphate with GGPP by paxC then forms 3-geranylgeranylindole (3-GGI), followed by epoxidation and cyclization of this intermediate (by paxM and paxB) to form paspaline. Paspaline is subsequently converted to 13-desoxypaxilline by paxP, the latter being then converted to paxilline by paxQ. Finally paxilline can be mono- and di-prenylated by paxD. The polypeptide is Prenyl transferase paxC (Penicillium paxilli).